A 189-amino-acid chain; its full sequence is Potassium-transporting ATPase KdpC subunit (189 aa).

The helical transmembrane segment at 10-30 (ITLVFCVFFSVFYILILWLFA) threads the bilayer.

This sequence belongs to the KdpC family. As to quaternary structure, the system is composed of three essential subunits: KdpA, KdpB and KdpC.

It localises to the cell inner membrane. Part of the high-affinity ATP-driven potassium transport (or Kdp) system, which catalyzes the hydrolysis of ATP coupled with the electrogenic transport of potassium into the cytoplasm. This subunit acts as a catalytic chaperone that increases the ATP-binding affinity of the ATP-hydrolyzing subunit KdpB by the formation of a transient KdpB/KdpC/ATP ternary complex. The sequence is that of Potassium-transporting ATPase KdpC subunit from Bacteroides thetaiotaomicron (strain ATCC 29148 / DSM 2079 / JCM 5827 / CCUG 10774 / NCTC 10582 / VPI-5482 / E50).